A 658-amino-acid polypeptide reads, in one-letter code: UvrABC system protein B (658 aa).

The Helicase ATP-binding domain maps to 26-413; it reads EGINSGKKKQ…SPEVIEQIIR (388 aa). Residue 39 to 46 participates in ATP binding; that stretch reads GATGTGKT. Positions 92–115 match the Beta-hairpin motif; that stretch reads YYDYYQPEAYVPQTDTFIEKDAQI. Residues 430–596 enclose the Helicase C-terminal domain; it reads QIDDLLGEIQ…TIQKGVRDVI (167 aa). In terms of domain architecture, UVR spans 622-657; that stretch reads EKTIAKMEAEMKEAAKALDFERAAELRDLLLELKAE.

Belongs to the UvrB family. As to quaternary structure, forms a heterotetramer with UvrA during the search for lesions. Interacts with UvrC in an incision complex.

Its subcellular location is the cytoplasm. Functionally, the UvrABC repair system catalyzes the recognition and processing of DNA lesions. A damage recognition complex composed of 2 UvrA and 2 UvrB subunits scans DNA for abnormalities. Upon binding of the UvrA(2)B(2) complex to a putative damaged site, the DNA wraps around one UvrB monomer. DNA wrap is dependent on ATP binding by UvrB and probably causes local melting of the DNA helix, facilitating insertion of UvrB beta-hairpin between the DNA strands. Then UvrB probes one DNA strand for the presence of a lesion. If a lesion is found the UvrA subunits dissociate and the UvrB-DNA preincision complex is formed. This complex is subsequently bound by UvrC and the second UvrB is released. If no lesion is found, the DNA wraps around the other UvrB subunit that will check the other stand for damage. In Bacillus anthracis, this protein is UvrABC system protein B.